Reading from the N-terminus, the 597-residue chain is MAAHLSYGRVNLNVLREAVRRELREFLDKCAGSKAIVWDEYLTGPFGLIAQYSLLKEHEVEKMFTLKGSRLPAADVKNIIFLVRPRLELMDMIAENVLSEDRRGPTRDFHILFVPRRSLLCEQRLKDLGVLGSFIYREEYSLDLIPFDGDLLSMESESAFKECYLEGDQTSLYHAAKGLMTLQALYGTIPQIFGKGECARQVANMMVRMKREFTGSQNSVFPVFDNLLLLDRNVDLLTPLASQLTYEGLIDEIYGIQNSYVKLPPEKFAPKKQGGGGGKDLPTEAKKLQLNSAEELYAEIRDKNFNAVGSVLSKKAKIISAAFEERHNAKTVGEIKQFVSQLPHMQAARGSLANHTSIAELIKDVTTSEDFFDKLTVEQEFMSGIDTDKVNNYIEDCIAQKHPLIKVLRLVCLQSMCNSGLKQKVLDYYKREILQTYGYEHILTLNNLEKAGLLKAQTGGRNNYPTIRKTLRLWMDDVNEQNPTDISYVYSGYAPLSVRLAQLLSRPGWRSIEEVLRILPGPHFEERQPLPTGVQKKRQPGENRVTLVFFLGGVTFAEIAALRFLSQLEDGGTEYVIATTKLINGSSWLEALMEKPF.

Belongs to the STXBP/unc-18/SEC1 family. In terms of assembly, core component of at least two putative endosomal tethering complexes, the homotypic fusion and vacuole protein sorting (HOPS) complex and the class C core vacuole/endosome tethering (CORVET) complex. Their common core is composed of the class C Vps proteins VPS11, VPS16, VPS18 and VPS33A, which in HOPS further associates with VPS39 and VPS41 and in CORVET with VPS8 and TGFBRAP1. Interacts with RAB5C, UVRAG, STX17, MON1A and MON1B. Associates with adaptor protein complex 3 (AP-3) and clathrin. Interacts with PLEKHM1. As to expression, ubiquitous.

The protein resides in the cytoplasmic vesicle. It localises to the late endosome membrane. Its subcellular location is the lysosome membrane. The protein localises to the early endosome. It is found in the autophagosome. The protein resides in the clathrin-coated vesicle. Functionally, plays a role in vesicle-mediated protein trafficking to lysosomal compartments including the endocytic membrane transport and autophagic pathways. Believed to act as a core component of the putative HOPS and CORVET endosomal tethering complexes which are proposed to be involved in the Rab5-to-Rab7 endosome conversion probably implicating MON1A/B, and via binding SNAREs and SNARE complexes to mediate tethering and docking events during SNARE-mediated membrane fusion. The HOPS complex is proposed to be recruited to Rab7 on the late endosomal membrane and to regulate late endocytic, phagocytic and autophagic traffic towards lysosomes. The CORVET complex is proposed to function as a Rab5 effector to mediate early endosome fusion probably in specific endosome subpopulations. Required for fusion of endosomes and autophagosomes with lysosomes; the function is dependent on its association with VPS16 but not VIPAS39. The function in autophagosome-lysosome fusion implicates STX17 but not UVRAG. This Rattus norvegicus (Rat) protein is Vacuolar protein sorting-associated protein 33A (Vps33a).